Here is a 177-residue protein sequence, read N- to C-terminus: Ribonuclease clavin (177 aa).

A signal peptide spans 1 to 27 (MVAIKNLVLVALTAVTALAMPSPLEER). 2 disulfide bridges follow: Cys33/Cys175 and Cys103/Cys159. His77 is a catalytic residue. The tract at residues 98–117 (WGNSDCDRPPKHSKNGDGKN) is disordered. A compositionally biased stretch (basic and acidic residues) spans 102–117 (DCDRPPKHSKNGDGKN). The Proton acceptor role is filled by Glu123. The Proton donor role is filled by His164.

This sequence belongs to the ribonuclease U2 family.

It is found in the secreted. Clavin has the same substrate specificity as alpha-sarcin. It is specific for purines in both single- and double-stranded RNA. Its toxic action on eukaryotic cells is the result of cleavage of a single phosphodiester bond in the 60S subunit of ribosomes. This chain is Ribonuclease clavin (cla), found in Aspergillus clavatus (strain ATCC 1007 / CBS 513.65 / DSM 816 / NCTC 3887 / NRRL 1 / QM 1276 / 107).